The primary structure comprises 329 residues: Thiamine thiazole synthase (329 aa).

Residues C86, 107–108 (EA), G115, and V180 each bind substrate. C218 carries the post-translational modification 2,3-didehydroalanine (Cys). Substrate contacts are provided by residues D220, H235, M287, and 297–299 (RMG).

This sequence belongs to the THI4 family. Homooctamer. The cofactor is Fe cation. During the catalytic reaction, a sulfide is transferred from Cys-218 to a reaction intermediate, generating a dehydroalanine residue.

It localises to the cytoplasm. It is found in the nucleus. It catalyses the reaction [ADP-thiazole synthase]-L-cysteine + glycine + NAD(+) = [ADP-thiazole synthase]-dehydroalanine + ADP-5-ethyl-4-methylthiazole-2-carboxylate + nicotinamide + 3 H2O + 2 H(+). Functionally, involved in biosynthesis of the thiamine precursor thiazole. Catalyzes the conversion of NAD and glycine to adenosine diphosphate 5-(2-hydroxyethyl)-4-methylthiazole-2-carboxylic acid (ADT), an adenylated thiazole intermediate. The reaction includes an iron-dependent sulfide transfer from a conserved cysteine residue of the protein to a thiazole intermediate. The enzyme can only undergo a single turnover, which suggests it is a suicide enzyme. May have additional roles in adaptation to various stress conditions and in DNA damage tolerance. This is Thiamine thiazole synthase from Phaeosphaeria nodorum (strain SN15 / ATCC MYA-4574 / FGSC 10173) (Glume blotch fungus).